A 182-amino-acid chain; its full sequence is ADP-ribosylation factor-like protein 3 (182 aa).

Gly2 carries the N-myristoyl glycine lipid modification. Ser5 is modified (phosphoserine). GTP is bound by residues 24-31, Thr48, 67-71, Gly70, 126-129, and 159-161; these read GLDNAGKT, DIGGQ, NKQD, and SAL. Residues Thr31 and Thr48 each coordinate Mg(2+).

It belongs to the small GTPase superfamily. Arf family. Found in a complex with ARL3, RP2 and UNC119 (or UNC119B); RP2 induces hydrolysis of GTP ARL3 in the complex, leading to the release of UNC119 (or UNC119B). Interacts with RP2; interaction is direct and stimulated with the activated GTP-bound form of ARL3. Interacts with SYS1. Interacts with ARL2BP; the GTP-bound form interacts with ARL2BP. Microtubule-associated protein. Does not interact with TBCC. Interacts with RP2. Interacts with PDE6D; the interaction occurs specifically with the GTP-bound form of ARL3. Interacts with GGA1; the interaction recruits PKD1:PKD2 complex to trans-Golgi network and is required for ciliary targeting of PKD1:PKD2 complex. Interacts with DNAAF9.

The protein localises to the golgi apparatus membrane. It localises to the cytoplasm. It is found in the cytoskeleton. Its subcellular location is the spindle. The protein resides in the nucleus. The protein localises to the microtubule organizing center. It localises to the centrosome. It is found in the cell projection. Its subcellular location is the cilium. Functionally, small GTP-binding protein which cycles between an inactive GDP-bound and an active GTP-bound form, and the rate of cycling is regulated by guanine nucleotide exchange factors (GEF) and GTPase-activating proteins (GAP). Required for normal cytokinesis and cilia signaling. Requires assistance from GTPase-activating proteins (GAPs) like RP2 and PDE6D, in order to cycle between inactive GDP-bound and active GTP-bound forms. Required for targeting proteins to the cilium, including myristoylated NPHP3 and prenylated INPP5E. Targets NPHP3 to the ciliary membrane by releasing myristoylated NPHP3 from UNC119B cargo adapter into the cilium. Required for PKD1:PKD2 complex targeting from the trans-Golgi network to the cilium. The polypeptide is ADP-ribosylation factor-like protein 3 (Arl3) (Rattus norvegicus (Rat)).